Reading from the N-terminus, the 971-residue chain is Exportin-2 (971 aa).

An Importin N-terminal domain is found at 29 to 102 (AEKFLESVEG…KANIVNLMLS (74 aa)).

This sequence belongs to the XPO2/CSE1 family. Interacts with cftr.

The protein localises to the cytoplasm. Its subcellular location is the nucleus. Export receptor for importin alpha. Mediates importin-alpha re-export from the nucleus to the cytoplasm after import substrates have been released into the nucleoplasm. Negatively regulates fluid secretion and plays a role in fluid homeostasis by down-regulating cftr activity. This chain is Exportin-2 (cse1l), found in Oreochromis niloticus (Nile tilapia).